We begin with the raw amino-acid sequence, 663 residues long: Translation factor GUF1, mitochondrial (663 aa).

The transit peptide at methionine 1–alanine 44 directs the protein to the mitochondrion. The tr-type G domain maps to glutamate 65–valine 245. Residues alanine 74 to serine 81, aspartate 138 to histidine 142, and asparagine 192 to aspartate 195 contribute to the GTP site.

It belongs to the TRAFAC class translation factor GTPase superfamily. Classic translation factor GTPase family. LepA subfamily.

The protein localises to the mitochondrion inner membrane. It catalyses the reaction GTP + H2O = GDP + phosphate + H(+). Functionally, promotes mitochondrial protein synthesis. May act as a fidelity factor of the translation reaction, by catalyzing a one-codon backward translocation of tRNAs on improperly translocated ribosomes. Binds to mitochondrial ribosomes in a GTP-dependent manner. This is Translation factor GUF1, mitochondrial from Coccidioides posadasii (strain C735) (Valley fever fungus).